The following is a 255-amino-acid chain: uncharacterized protein (255 aa).

The first 22 residues, M1–M22, serve as a signal peptide directing secretion.

This is an uncharacterized protein from Acanthamoeba polyphaga (Amoeba).